A 69-amino-acid polypeptide reads, in one-letter code: uncharacterized protein (69 aa).

Disordered regions lie at residues 1–32 and 44–69; these read MSAPYKNLDRDTKHTHPKLNETERNLNRGWGD and QSDADKQLAEDKMETKYEKSKPAPSD. 2 stretches are compositionally biased toward basic and acidic residues: residues 7 to 32 and 46 to 69; these read NLDRDTKHTHPKLNETERNLNRGWGD and DADKQLAEDKMETKYEKSKPAPSD.

This is an uncharacterized protein from Schizosaccharomyces pombe (strain 972 / ATCC 24843) (Fission yeast).